We begin with the raw amino-acid sequence, 443 residues long: Ribosomal protein uS12 methylthiotransferase RimO (443 aa).

Residues 5 to 115 (PNIGFISLGC…VMQHVHKYVP (111 aa)) enclose the MTTase N-terminal domain. [4Fe-4S] cluster-binding residues include Cys14, Cys50, Cys79, Cys147, Cys151, and Cys154. The Radical SAM core domain occupies 133 to 374 (LTPKHYAYLK…MQVQQRISVA (242 aa)). The TRAM domain occupies 377–443 (QQKIGKTLAI…ADEYDLWGTY (67 aa)).

It belongs to the methylthiotransferase family. RimO subfamily. [4Fe-4S] cluster serves as cofactor.

The protein resides in the cytoplasm. It carries out the reaction L-aspartate(89)-[ribosomal protein uS12]-hydrogen + (sulfur carrier)-SH + AH2 + 2 S-adenosyl-L-methionine = 3-methylsulfanyl-L-aspartate(89)-[ribosomal protein uS12]-hydrogen + (sulfur carrier)-H + 5'-deoxyadenosine + L-methionine + A + S-adenosyl-L-homocysteine + 2 H(+). Its function is as follows. Catalyzes the methylthiolation of an aspartic acid residue of ribosomal protein uS12. The chain is Ribosomal protein uS12 methylthiotransferase RimO from Haemophilus ducreyi (strain 35000HP / ATCC 700724).